Reading from the N-terminus, the 366-residue chain is tRNA/tmRNA (uracil-C(5))-methyltransferase (366 aa).

S-adenosyl-L-methionine is bound by residues glutamine 190, tyrosine 218, asparagine 223, glutamate 239, and aspartate 299. Cysteine 324 (nucleophile) is an active-site residue. Glutamate 358 acts as the Proton acceptor in catalysis.

The protein belongs to the class I-like SAM-binding methyltransferase superfamily. RNA M5U methyltransferase family. TrmA subfamily.

It carries out the reaction uridine(54) in tRNA + S-adenosyl-L-methionine = 5-methyluridine(54) in tRNA + S-adenosyl-L-homocysteine + H(+). The enzyme catalyses uridine(341) in tmRNA + S-adenosyl-L-methionine = 5-methyluridine(341) in tmRNA + S-adenosyl-L-homocysteine + H(+). Functionally, dual-specificity methyltransferase that catalyzes the formation of 5-methyluridine at position 54 (m5U54) in all tRNAs, and that of position 341 (m5U341) in tmRNA (transfer-mRNA). This Escherichia coli O157:H7 protein is tRNA/tmRNA (uracil-C(5))-methyltransferase.